A 390-amino-acid polypeptide reads, in one-letter code: tRNA(Met) cytidine acetate ligase (390 aa).

Residues 7-20 (VVEYNPFHNGHKLH), glycine 101, asparagine 162, and arginine 187 each bind ATP.

It belongs to the TmcAL family.

The protein resides in the cytoplasm. It carries out the reaction cytidine(34) in elongator tRNA(Met) + acetate + ATP = N(4)-acetylcytidine(34) in elongator tRNA(Met) + AMP + diphosphate. Its function is as follows. Catalyzes the formation of N(4)-acetylcytidine (ac(4)C) at the wobble position of elongator tRNA(Met), using acetate and ATP as substrates. First activates an acetate ion to form acetyladenylate (Ac-AMP) and then transfers the acetyl group to tRNA to form ac(4)C34. The polypeptide is tRNA(Met) cytidine acetate ligase (Listeria monocytogenes serovar 1/2a (strain ATCC BAA-679 / EGD-e)).